Consider the following 173-residue polypeptide: Co-chaperone protein HscB homolog (173 aa).

In terms of domain architecture, J spans 5 to 77 (CHYALFDLQP…PRRARYLLAI (73 aa)).

This sequence belongs to the HscB family. Interacts with HscA and stimulates its ATPase activity.

Co-chaperone involved in the maturation of iron-sulfur cluster-containing proteins. Seems to help targeting proteins to be folded toward HscA. The protein is Co-chaperone protein HscB homolog of Pseudomonas putida (strain ATCC 700007 / DSM 6899 / JCM 31910 / BCRC 17059 / LMG 24140 / F1).